Reading from the N-terminus, the 159-residue chain is Ribosomal RNA large subunit methyltransferase H (159 aa).

S-adenosyl-L-methionine contacts are provided by residues leucine 76, glycine 108, and 127 to 132; that span reads FSKMTF.

The protein belongs to the RNA methyltransferase RlmH family. As to quaternary structure, homodimer.

The protein localises to the cytoplasm. It carries out the reaction pseudouridine(1915) in 23S rRNA + S-adenosyl-L-methionine = N(3)-methylpseudouridine(1915) in 23S rRNA + S-adenosyl-L-homocysteine + H(+). In terms of biological role, specifically methylates the pseudouridine at position 1915 (m3Psi1915) in 23S rRNA. In Geobacillus kaustophilus (strain HTA426), this protein is Ribosomal RNA large subunit methyltransferase H.